We begin with the raw amino-acid sequence, 342 residues long: Phosphoribosylformylglycinamidine cyclo-ligase (342 aa).

Belongs to the AIR synthase family.

The protein localises to the cytoplasm. It catalyses the reaction 2-formamido-N(1)-(5-O-phospho-beta-D-ribosyl)acetamidine + ATP = 5-amino-1-(5-phospho-beta-D-ribosyl)imidazole + ADP + phosphate + H(+). It participates in purine metabolism; IMP biosynthesis via de novo pathway; 5-amino-1-(5-phospho-D-ribosyl)imidazole from N(2)-formyl-N(1)-(5-phospho-D-ribosyl)glycinamide: step 2/2. The polypeptide is Phosphoribosylformylglycinamidine cyclo-ligase (Staphylococcus aureus (strain bovine RF122 / ET3-1)).